Reading from the N-terminus, the 1091-residue chain is Integrin alpha-6 (1091 aa).

An N-terminal signal peptide occupies residues 1 to 23; it reads MAVAGQLCLLYLSAGLLARLGTA. Residues 24–1011 are Extracellular-facing; that stretch reads FNLDTREDNV…FPSKTVAQYS (988 aa). FG-GAP repeat units lie at residues 30 to 95, 101 to 166, 176 to 229, 244 to 300, 301 to 363, 364 to 419, and 420 to 479; these read EDNV…GPCT, NDAD…IEDD, DGRL…FFDM, DHDE…KSAH, LLPE…KWSN, VKPI…GIIT, and KPTQ…VTPN. Residue N78 is glycosylated (N-linked (GlcNAc...) asparagine). 3 disulfides stabilise this stretch: C86–C94, C131–C154, and C175–C188. N-linked (GlcNAc...) asparagine glycans are attached at residues N223 and N284. D324, N326, D328, and D332 together coordinate Ca(2+). The N-linked (GlcNAc...) asparagine glycan is linked to N370. Ca(2+) is bound by residues D386, N388, D390, Y392, D394, D441, D443, N445, Y447, and D449. 4 disulfides stabilise this stretch: C489–C496, C502–C562, C626–C632, and C726–C737. N-linked (GlcNAc...) asparagine glycans are attached at residues N731, N746, and N927. Intrachain disulfides connect C881-C928 and C934-C939. N958 is a glycosylation site (N-linked (GlcNAc...) asparagine). Residues 1012–1037 traverse the membrane as a helical segment; sequence GVAWWIILLAVLAGILMLALLVFLLW. Residues 1038–1091 lie on the Cytoplasmic side of the membrane; that stretch reads KCGFFKRSRYDDSIPRYHAVRIRKEEREIKDEKHMDNLEKKQWITKWNENESYS. A lipid anchor (S-palmitoyl cysteine; by DHHC3) is attached at C1039. The GFFKR motif signature appears at 1040 to 1044; that stretch reads GFFKR. The residue at position 1064 (R1064) is a Phosphoserine.

It belongs to the integrin alpha chain family. Heterodimer of an alpha and a beta subunit. The alpha subunit is composed of a heavy and a light chain linked by a disulfide bond. Alpha-6 associates with either beta-1 (ITGB1) or beta-4 (ITGB4) to form ITGA6:ITGB1 and ITGA6:ITGB4, respectively. ITGA6:ITGB1 is found in a complex with CD9; interaction takes place in oocytes and is involved in sperm-egg fusion. ITGA6:ITGB4 is found in a ternary complex with NRG1 and ERBB3. ITGA6:ITGB4 is found in a ternary complex with IGF1 and IGF1R. ITGA6:ITGB4 interacts with IGF2. Interacts with ADAM9. Interacts with RAB21. Interacts with MDK. ITGA6:ITGB1 interacts with MDK; this interaction mediates MDK-induced neurite outgrowth. Interacts with CD82; this interaction down-regulates ITGA6-mediated cell adhesion. Isoforms containing segment A, but not segment B, are the major targets for PMA-induced phosphorylation. Phosphorylation occurs on 'Ser-1064' of isoform alpha-6X1A. Phosphorylation is not required for the induction of integrin alpha-6A/beta-1 high affinity but may reduce the affinity for ligand. Post-translationally, undergoes PLAU-mediated cleavage at residues Arg-595-596-Arg in a time-dependent manner to produce processed integrin alpha-6 (alpha6p). In terms of processing, palmitoylation by DHHC3 enhances stability and cell surface expression. Expressed at low levels in normal skin tissue with elevated levels in skin tumors.

It localises to the cell membrane. Its function is as follows. Integrin alpha-6/beta-1 (ITGA6:ITGB1) is a receptor for laminin on platelets. Integrin alpha-6/beta-1 (ITGA6:ITGB1) is present in oocytes and is involved in sperm-egg fusion. Integrin alpha-6/beta-4 (ITGA6:ITGB4) is a receptor for laminin in epithelial cells and it plays a critical structural role in the hemidesmosome. ITGA6:ITGB4 binds to NRG1 (via EGF domain) and this binding is essential for NRG1-ERBB signaling. ITGA6:ITGB4 binds to IGF1 and this binding is essential for IGF1 signaling. ITGA6:ITGB4 binds to IGF2 and this binding is essential for IGF2 signaling. The polypeptide is Integrin alpha-6 (Itga6) (Mus musculus (Mouse)).